The chain runs to 323 residues: METKKNNSEYIPEFDKSFRHPRYWGAWLGVAAMAGIALTPPKFRDPILARLGRFAGRLGKSSRRRALINLSLCFPERSEAEREAIVDEMFATAPQAMAMMAELAIRGPEKIQPRVGWQGLEIIEEMRRNNEKVIFLVPHGWAVDIPAMLMASQGQKMAAMFHNQGNPVFDYVWNTVRRRFGGRLHARNDGIKPFIQSVRQGYWGYYLPDQDHGPEHSEFVDFFATYKATLPAIGRLMKVCRARVVPLFPIYDGKTHRLTIQVRPPMDDLLEADDHTIERRMNEEVEIFVGPRPEQYTWILKLLKTRKPGEIQPYKRKDLYPIK.

A helical membrane pass occupies residues 23-43 (YWGAWLGVAAMAGIALTPPKF). The HXXXXD motif signature appears at 139-144 (HGWAVD).

This sequence belongs to the LpxL/LpxM/LpxP family. LpxM subfamily.

Its subcellular location is the cell inner membrane. It catalyses the reaction an alpha-Kdo-(2-&gt;4)-alpha-Kdo-(2-&gt;6)-(acyl)-lipid IVA + a fatty acyl-[ACP] = an alpha-Kdo-(2-&gt;4)-alpha-Kdo-(2-&gt;6)-lipid A + holo-[ACP]. It participates in glycolipid biosynthesis; KDO(2)-lipid A biosynthesis; KDO(2)-lipid A from CMP-3-deoxy-D-manno-octulosonate and lipid IV(A): step 4/4. The protein operates within bacterial outer membrane biogenesis; lipopolysaccharide biosynthesis. Catalyzes the transfer of an acyl chain from an acyl-[acyl-carrier-protein] (ACP) to a Kdo(2)-(acyl)-lipid IV(A) to form a Kdo(2)-lipid A. This Shigella flexneri protein is Lipid A biosynthesis acyltransferase 1.